The chain runs to 354 residues: tRNA-specific 2-thiouridylase MnmA (354 aa).

Residues leucine 6–serine 13 and leucine 33 contribute to the ATP site. Cysteine 100 (nucleophile) is an active-site residue. Cysteine 100 and cysteine 195 are disulfide-bonded. Glycine 123 provides a ligand contact to ATP. The interaction with tRNA stretch occupies residues lysine 145–glutamine 147. The Cysteine persulfide intermediate role is filled by cysteine 195.

Belongs to the MnmA/TRMU family.

The protein resides in the cytoplasm. The enzyme catalyses S-sulfanyl-L-cysteinyl-[protein] + uridine(34) in tRNA + AH2 + ATP = 2-thiouridine(34) in tRNA + L-cysteinyl-[protein] + A + AMP + diphosphate + H(+). In terms of biological role, catalyzes the 2-thiolation of uridine at the wobble position (U34) of tRNA, leading to the formation of s(2)U34. The polypeptide is tRNA-specific 2-thiouridylase MnmA (Borrelia duttonii (strain Ly)).